The chain runs to 406 residues: Cysteine desulfurase (406 aa).

Residue lysine 226 is modified to N6-(pyridoxal phosphate)lysine. Cysteine 364 acts as the Cysteine persulfide intermediate in catalysis.

The protein belongs to the class-V pyridoxal-phosphate-dependent aminotransferase family. Csd subfamily. As to quaternary structure, homodimer. Interacts with SufE and the SufBCD complex composed of SufB, SufC and SufD. The interaction with SufE is required to mediate the direct transfer of the sulfur atom from the S-sulfanylcysteine. It depends on pyridoxal 5'-phosphate as a cofactor.

The protein resides in the cytoplasm. The enzyme catalyses (sulfur carrier)-H + L-cysteine = (sulfur carrier)-SH + L-alanine. It catalyses the reaction L-selenocysteine + AH2 = hydrogenselenide + L-alanine + A + H(+). The protein operates within cofactor biosynthesis; iron-sulfur cluster biosynthesis. Functionally, cysteine desulfurases mobilize the sulfur from L-cysteine to yield L-alanine, an essential step in sulfur metabolism for biosynthesis of a variety of sulfur-containing biomolecules. Component of the suf operon, which is activated and required under specific conditions such as oxidative stress and iron limitation. Acts as a potent selenocysteine lyase in vitro, that mobilizes selenium from L-selenocysteine. Selenocysteine lyase activity is however unsure in vivo. The protein is Cysteine desulfurase of Serratia proteamaculans (strain 568).